The primary structure comprises 210 residues: Dephospho-CoA kinase (210 aa).

One can recognise a DPCK domain in the interval 4-201; the sequence is IVALTGGICS…NFYIYLSKQN (198 aa). 12–17 lines the ATP pocket; the sequence is CSGKTT.

It belongs to the CoaE family.

It localises to the cytoplasm. It carries out the reaction 3'-dephospho-CoA + ATP = ADP + CoA + H(+). It participates in cofactor biosynthesis; coenzyme A biosynthesis; CoA from (R)-pantothenate: step 5/5. In terms of biological role, catalyzes the phosphorylation of the 3'-hydroxyl group of dephosphocoenzyme A to form coenzyme A. This is Dephospho-CoA kinase from Buchnera aphidicola subsp. Schizaphis graminum (strain Sg).